The chain runs to 186 residues: Large ribosomal subunit protein uL5 (186 aa).

This sequence belongs to the universal ribosomal protein uL5 family. In terms of assembly, part of the 50S ribosomal subunit; contacts the 5S rRNA and probably tRNA. Forms a bridge to the 30S subunit in the 70S ribosome.

This is one of the proteins that bind and probably mediate the attachment of the 5S RNA into the large ribosomal subunit, where it forms part of the central protuberance. In the 70S ribosome it contacts protein S13 of the 30S subunit (bridge B1b), connecting the 2 subunits; this bridge is implicated in subunit movement. May contact the P site tRNA; the 5S rRNA and some of its associated proteins might help stabilize positioning of ribosome-bound tRNAs. This chain is Large ribosomal subunit protein uL5, found in Pyrococcus furiosus (strain ATCC 43587 / DSM 3638 / JCM 8422 / Vc1).